We begin with the raw amino-acid sequence, 141 residues long: Nucleoside diphosphate kinase (141 aa).

ATP contacts are provided by Lys-11, Phe-59, Arg-87, Thr-93, Arg-104, and Asn-114. The Pros-phosphohistidine intermediate role is filled by His-117.

Belongs to the NDK family. In terms of assembly, homotetramer. Requires Mg(2+) as cofactor.

The protein localises to the cytoplasm. The catalysed reaction is a 2'-deoxyribonucleoside 5'-diphosphate + ATP = a 2'-deoxyribonucleoside 5'-triphosphate + ADP. It catalyses the reaction a ribonucleoside 5'-diphosphate + ATP = a ribonucleoside 5'-triphosphate + ADP. Major role in the synthesis of nucleoside triphosphates other than ATP. The ATP gamma phosphate is transferred to the NDP beta phosphate via a ping-pong mechanism, using a phosphorylated active-site intermediate. This is Nucleoside diphosphate kinase from Pseudomonas fluorescens (strain ATCC BAA-477 / NRRL B-23932 / Pf-5).